Here is a 305-residue protein sequence, read N- to C-terminus: tRNA dimethylallyltransferase (305 aa).

8–15 (GPTAVGKT) is an ATP binding site. A substrate-binding site is contributed by 10-15 (TAVGKT). Residues 33–36 (DSRQ) form an interaction with substrate tRNA region.

Belongs to the IPP transferase family. Monomer. It depends on Mg(2+) as a cofactor.

It carries out the reaction adenosine(37) in tRNA + dimethylallyl diphosphate = N(6)-dimethylallyladenosine(37) in tRNA + diphosphate. Its function is as follows. Catalyzes the transfer of a dimethylallyl group onto the adenine at position 37 in tRNAs that read codons beginning with uridine, leading to the formation of N6-(dimethylallyl)adenosine (i(6)A). This Thermotoga neapolitana (strain ATCC 49049 / DSM 4359 / NBRC 107923 / NS-E) protein is tRNA dimethylallyltransferase.